The chain runs to 449 residues: Protein trichome birefringence-like 35 (449 aa).

A helical; Signal-anchor for type II membrane protein transmembrane segment spans residues 12 to 29; sequence LPLAGLLFILVVTFMILF. Residues 185–187 carry the GDS motif motif; it reads GDS. Positions 428–442 match the DCXHWCLPGXXDXWN motif motif; it reads DCTHWCVPGVPDVWN.

The protein belongs to the PC-esterase family. TBL subfamily.

The protein localises to the membrane. Its function is as follows. May act as a bridging protein that binds pectin and other cell wall polysaccharides. Probably involved in maintaining esterification of pectins. May be involved in the specific O-acetylation of cell wall polymers. The chain is Protein trichome birefringence-like 35 (TBL35) from Arabidopsis thaliana (Mouse-ear cress).